A 518-amino-acid chain; its full sequence is UPF0288 protein Mbar_A0706 (518 aa).

Belongs to the UPF0288 family.

The protein is UPF0288 protein Mbar_A0706 of Methanosarcina barkeri (strain Fusaro / DSM 804).